We begin with the raw amino-acid sequence, 186 residues long: 2-oxoglutarate synthase subunit KorC (186 aa).

As to quaternary structure, heterotetramer of the KorA, KorB, KorC and KorD subunits.

It carries out the reaction 2 oxidized [2Fe-2S]-[ferredoxin] + 2-oxoglutarate + CoA = succinyl-CoA + 2 reduced [2Fe-2S]-[ferredoxin] + CO2 + H(+). This is 2-oxoglutarate synthase subunit KorC (korC) from Methanothermobacter marburgensis (strain ATCC BAA-927 / DSM 2133 / JCM 14651 / NBRC 100331 / OCM 82 / Marburg) (Methanobacterium thermoautotrophicum).